A 480-amino-acid polypeptide reads, in one-letter code: Gamma-aminobutyric acid receptor subunit rho-1 (480 aa).

The N-terminal stretch at 1-21 is a signal peptide; sequence MLAVQNMKFGIFLLWWGWVLA. The Extracellular segment spans residues 22–281; sequence AESTAHWPGR…LYINFTLRRH (260 aa). Positions 29-38 are enriched in basic and acidic residues; sequence PGREVHEPSR. Positions 29–67 are disordered; sequence PGREVHEPSRKGSRPQRQRRGAHDDAHKQGSPILRRSSD. Residues 39–48 are compositionally biased toward basic residues; sequence KGSRPQRQRR. Arg-126 serves as a coordination point for 4-aminobutanoate. Asn-141 carries N-linked (GlcNAc...) asparagine glycosylation. Ser-190 serves as a coordination point for 4-aminobutanoate. The cysteines at positions 199 and 213 are disulfide-linked. Glu-218 is a binding site for 4-aminobutanoate. Asn-235 and Asn-275 each carry an N-linked (GlcNAc...) asparagine glycan. The helical transmembrane segment at 282-302 threads the bilayer; it reads IFFFLLQTYFPATLMVMLSWV. Residues 303-314 are Cytoplasmic-facing; that stretch reads SFWIDRRAVPAR. A helical transmembrane segment spans residues 315–335; that stretch reads VPLGITTVLTMSTIITGVNAS. Residues 336–346 are Extracellular-facing; it reads MPRVSYIKAVD. The helical transmembrane segment at 347–367 threads the bilayer; it reads IYLWVSFVFVFLSVLEYAAVN. Topologically, residues 368-458 are cytoplasmic; sequence YLTTVQERKE…MRINTHAIDK (91 aa). Residues 459 to 479 traverse the membrane as a helical segment; it reads YSRIIFPAAYILFNLIYWSIF. Position 480 (Ser-480) is a topological domain, extracellular.

Belongs to the ligand-gated ion channel (TC 1.A.9) family. Gamma-aminobutyric acid receptor (TC 1.A.9.5) subfamily. GABRR1 sub-subfamily. Three rho subunits (rho-1/GBRR1, rho-2/GBRR2 and rho-3/GBRR3) coassemble either to form functional homopentamers or heteropentamers. Rho-1/GBRR1 subunits can also associate with alpha-1/GBRA1 subunits to form a functional GABAAR. Interacts with SQSTM1. Expressed in the cerebellum.

The protein localises to the postsynaptic cell membrane. Its subcellular location is the cell membrane. The enzyme catalyses chloride(in) = chloride(out). With respect to regulation, inhibited by TPMPA, a rho-specific antagonist, when forming a homopentamer. In contrast with other GABAARs, rho-1 GABAAR is not inhibited by bicuculline when forming a homopentamer. In terms of biological role, rho subunit of the pentameric ligand-gated chloride channels responsible for mediating the effects of gamma-aminobutyric acid (GABA), the major inhibitory neurotransmitter in the brain. Rho-containing GABA-gated chloride channels are a subclass of GABA(A) receptors (GABAARs) entirely composed of rho subunits, where GABA molecules bind at the rho intersubunit interfaces. When activated by GABA, rho-GABAARs selectively allow the flow of chloride anions across the cell membrane down their electrochemical gradient. Rho-1 subunits are primarily expressed in retina where rho-1-containing GABAARs play a role in retinal neurotransmission. Rho-1 GABAARs are also involved in neuronal tonic (extrasynaptic) and phasic (synaptic) transmission in the Purkinje neurons of the cerebellum. Rho-1 GABAARs may also contribute to the regulation of glial development in the cerebellum by controlling extrasynaptic transmission. The polypeptide is Gamma-aminobutyric acid receptor subunit rho-1 (Mus musculus (Mouse)).